The primary structure comprises 396 residues: Probable sugar efflux transporter (396 aa).

12 consecutive transmembrane segments (helical) span residues 15–35, 51–71, 84–104, 109–129, 137–157, 168–188, 209–229, 245–265, 273–293, 297–317, 333–353, and 365–385; these read VLIM…PVAM, GLMM…AMLA, LFII…FWIL, MCIA…VMRI, QALG…LPIG, VTFG…IRLL, PLLL…FTAY, NFAT…SLLF, PTKF…LLLF, TIIA…CIGL, VATA…ALFG, and IGYT…TTHL.

Belongs to the major facilitator superfamily. SotB (TC 2.A.1.2) family.

Its subcellular location is the cell inner membrane. Involved in the efflux of sugars. The physiological role may be the reduction of the intracellular concentration of toxic sugars or sugar metabolites. In Haemophilus influenzae (strain ATCC 51907 / DSM 11121 / KW20 / Rd), this protein is Probable sugar efflux transporter.